The following is a 189-amino-acid chain: Batroxicidin (189 aa).

An N-terminal signal peptide occupies residues 1 to 22 (MQGFFWKTWLVVALCGTSSSLA). Residues 23 to 155 (HRPLSYGEAL…DEEKDRPKRV (133 aa)) constitute a propeptide that is removed on maturation. 2 disulfides stabilise this stretch: C79/C90 and C101/C118. The span at 125–148 (EEEEEDEEEQKAEVEKDEEKEDEE) shows a compositional bias: acidic residues. A disordered region spans residues 125–152 (EEEEEDEEEQKAEVEKDEEKEDEEKDRP).

It belongs to the cathelicidin family. In terms of tissue distribution, expressed by the venom gland.

The protein localises to the secreted. It localises to the target cell membrane. In terms of biological role, potent antimicrobial peptide against Gram-negative (MIC=0.25 ug/ml against E.coli ATCC 25922, MIC=1 ug/ml against P.aeruginosa) and Gram-positive bacteria (MIC=32 ug/ml against E.faecalis, MIC=32 ug/ml against S.aureus). Adopts an amphipathic alpha helical conformation, that may allow to partition into the target membrane. Low hemolytic activities have been observed on mammalian cells. In addition, when tested in vitro on the parasite Trypanosoma cruzi (responsible of the Chagas disease), is able to reduce the number of the three forms (epimastigote, trypomastigote and amastigote) by inducing cell death through necrosis. This chain is Batroxicidin, found in Bothrops atrox (Barba amarilla).